Here is an 86-residue protein sequence, read N- to C-terminus: Serine protease inhibitor Kazal-type 4 (86 aa).

A signal peptide spans 1–26 (MAVRLWVVALALAALFIVDREVPVSA). In terms of domain architecture, Kazal-like spans 31–86 (FSRMPICEHMTESPDCSRIYDPVCGTDGVTYESECKLCLARIENKQDIQIVKDGEC). 3 cysteine pairs are disulfide-bonded: cysteine 37–cysteine 68, cysteine 46–cysteine 65, and cysteine 54–cysteine 86.

Synthesized in duodenal goblet cells and in monocytes in bone marrow and blood.

It localises to the secreted. Inhibits the glucose-induced insulin secretion from perfused pancreas; also plays a role in the immune system. Does not inhibit trypsin. In Sus scrofa (Pig), this protein is Serine protease inhibitor Kazal-type 4 (SPINK4).